Here is a 469-residue protein sequence, read N- to C-terminus: MSPQTETKASVGFKAGVKDYRLTYYTPDYETKDTDILAAFRVTPQPGVPAEEAGAAVAAESSTGTWTTVWTDGLTSLDRYKGRCYHIEAVVGEENQYIGYVAYPLDLFEEGSVTNMFTSIVGNVFGFKALRALRLEDLRIPPAYSKTFQGPPHGIQVERDKLNKYGRPLLGCTIKPKLGLSAKNYGRAVYECLRGGLDFTKDDENVNSQPFMRWRDRFVFCAEAIYKAQAETGEIKGHYLNATAGTCEEMIKRAVFARELGAPIVMHDYLTGGFTANTSLAHYCRDNGLLLHIHRAMHAVIDRQKNHGMHFRVLAKALRMSGGDHIHAGTVVGKLEGEREMTLGFVDLLRDDYIEKDRSRGIFFTQDWVSMPGVLPVASGGIHVWHMPALTEIFGDDSVLQFGGGTIGHPWGNAPGAVANRVALEACVQARNEGRDLAREGNEIIREASSWSPELAAACEVWKAIKFEF.

Residues 1–2 (MS) constitute a propeptide that is removed on maturation. Proline 3 is modified (N-acetylproline). Lysine 14 is subject to N6,N6,N6-trimethyllysine. The substrate site is built by asparagine 123 and threonine 173. The active-site Proton acceptor is lysine 175. Lysine 177 is a substrate binding site. Mg(2+)-binding residues include lysine 201, aspartate 203, and glutamate 204. Lysine 201 carries the post-translational modification N6-carboxylysine. The Proton acceptor role is filled by histidine 294. Residues arginine 295, histidine 327, and serine 379 each coordinate substrate.

Belongs to the RuBisCO large chain family. Type I subfamily. Heterohexadecamer of 8 large chains and 8 small chains; disulfide-linked. The disulfide link is formed within the large subunit homodimers. Mg(2+) serves as cofactor. Post-translationally, the disulfide bond which can form in the large chain dimeric partners within the hexadecamer appears to be associated with oxidative stress and protein turnover.

It localises to the plastid. The protein resides in the chloroplast. The catalysed reaction is 2 (2R)-3-phosphoglycerate + 2 H(+) = D-ribulose 1,5-bisphosphate + CO2 + H2O. The enzyme catalyses D-ribulose 1,5-bisphosphate + O2 = 2-phosphoglycolate + (2R)-3-phosphoglycerate + 2 H(+). In terms of biological role, ruBisCO catalyzes two reactions: the carboxylation of D-ribulose 1,5-bisphosphate, the primary event in carbon dioxide fixation, as well as the oxidative fragmentation of the pentose substrate in the photorespiration process. Both reactions occur simultaneously and in competition at the same active site. The chain is Ribulose bisphosphate carboxylase large chain from Iris ensata (Japanese iris).